The chain runs to 444 residues: MTFLQYFKTDGIRGKVGVNPITPDFLLKLGWSIGIVLGKNKTQKIIIGRDTRISGTMLQSILEFGILSTGVSTLLAGCMPTSAISYFTKSLNASAGIVISGSHNPFYDNGIKIFYKNGVKLTKEIEFSIEQKVQHTFLYPDYVNFGHSNNILDPESLYIDFCKKNFPKDLNLSKFTIILDCANGATFKIAPKIFEDLGARVITVAINPNGVNINQNSGSTNILMLKKIVLSESADLGLAFDGDGDRVIMVDHLGNQVDGDQIIYIIAKEYLKENKLKGGVVGTSMTNMGVILGLKKLGIPFCPAQIGDRNVYEKIKEKKWILGAEKSGHIVLLDKHSTGDGIIASLQVLLTMINNHMTLYDLSNQIKLFPQVFLNIFLKQDKDFEKDIKIQNILTQYKNILGQNSRVLVRRSGTEPCIRIMVEGEDYLKVYELAQYIGKTIKLL.

The active-site Phosphoserine intermediate is Ser-102. Mg(2+) is bound by residues Ser-102, Asp-241, Asp-243, and Asp-245. At Ser-102 the chain carries Phosphoserine.

This sequence belongs to the phosphohexose mutase family. The cofactor is Mg(2+). Post-translationally, activated by phosphorylation.

It carries out the reaction alpha-D-glucosamine 1-phosphate = D-glucosamine 6-phosphate. Catalyzes the conversion of glucosamine-6-phosphate to glucosamine-1-phosphate. In Buchnera aphidicola subsp. Acyrthosiphon pisum (strain 5A), this protein is Phosphoglucosamine mutase.